Reading from the N-terminus, the 410-residue chain is Multifunctional CCA protein (410 aa).

Gly-8 and Arg-11 together coordinate ATP. CTP contacts are provided by Gly-8 and Arg-11. Mg(2+)-binding residues include Glu-21 and Asp-23. Residues Arg-91, Arg-137, and Arg-140 each contribute to the ATP site. Residues Arg-91, Arg-137, and Arg-140 each contribute to the CTP site. Positions 228–329 constitute an HD domain; sequence TGVHVLSVLR…LELLQRFDVF (102 aa).

Belongs to the tRNA nucleotidyltransferase/poly(A) polymerase family. Bacterial CCA-adding enzyme type 1 subfamily. In terms of assembly, monomer. Can also form homodimers and oligomers. Mg(2+) is required as a cofactor. Requires Ni(2+) as cofactor.

It carries out the reaction a tRNA precursor + 2 CTP + ATP = a tRNA with a 3' CCA end + 3 diphosphate. The enzyme catalyses a tRNA with a 3' CCA end + 2 CTP + ATP = a tRNA with a 3' CCACCA end + 3 diphosphate. In terms of biological role, catalyzes the addition and repair of the essential 3'-terminal CCA sequence in tRNAs without using a nucleic acid template. Adds these three nucleotides in the order of C, C, and A to the tRNA nucleotide-73, using CTP and ATP as substrates and producing inorganic pyrophosphate. tRNA 3'-terminal CCA addition is required both for tRNA processing and repair. Also involved in tRNA surveillance by mediating tandem CCA addition to generate a CCACCA at the 3' terminus of unstable tRNAs. While stable tRNAs receive only 3'-terminal CCA, unstable tRNAs are marked with CCACCA and rapidly degraded. In Ectopseudomonas mendocina (strain ymp) (Pseudomonas mendocina), this protein is Multifunctional CCA protein.